The chain runs to 96 residues: UPF0235 protein VC0395_A0010/VC395_0502 (96 aa).

It belongs to the UPF0235 family.

The sequence is that of UPF0235 protein VC0395_A0010/VC395_0502 from Vibrio cholerae serotype O1 (strain ATCC 39541 / Classical Ogawa 395 / O395).